The chain runs to 370 residues: 4-hydroxy-3-methylbut-2-en-1-yl diphosphate synthase (flavodoxin) (370 aa).

[4Fe-4S] cluster contacts are provided by Cys268, Cys271, Cys303, and Glu310.

This sequence belongs to the IspG family. The cofactor is [4Fe-4S] cluster.

The catalysed reaction is (2E)-4-hydroxy-3-methylbut-2-enyl diphosphate + oxidized [flavodoxin] + H2O + 2 H(+) = 2-C-methyl-D-erythritol 2,4-cyclic diphosphate + reduced [flavodoxin]. It participates in isoprenoid biosynthesis; isopentenyl diphosphate biosynthesis via DXP pathway; isopentenyl diphosphate from 1-deoxy-D-xylulose 5-phosphate: step 5/6. Functionally, converts 2C-methyl-D-erythritol 2,4-cyclodiphosphate (ME-2,4cPP) into 1-hydroxy-2-methyl-2-(E)-butenyl 4-diphosphate. This is 4-hydroxy-3-methylbut-2-en-1-yl diphosphate synthase (flavodoxin) from Bacillus anthracis (strain A0248).